The sequence spans 657 residues: ER degradation-enhancing alpha-mannosidase-like protein 1 (657 aa).

The Cytoplasmic portion of the chain corresponds to 1–4; the sequence is MQWR. A helical; Signal-anchor for type II membrane protein transmembrane segment spans residues 5-25; sequence ALVLGLVLLRLGLHGVLWLVF. Residues 26 to 657 lie on the Lumenal side of the membrane; the sequence is GLGPSMGFYQ…RQIDQMVGLI (632 aa). The tract at residues 48 to 94 is disordered; that stretch reads SPDGPASPTSGPVGRPGGVSGPSWLQPPGTGAAQSPRKAPRRPGPGM. Asparagine 181, asparagine 198, asparagine 299, asparagine 342, and asparagine 624 each carry an N-linked (GlcNAc...) asparagine glycan.

This sequence belongs to the glycosyl hydrolase 47 family. In terms of assembly, interacts with DNAJC10. Interacts with DERL2 and DERL3. Binds to SEL1L.

It is found in the endoplasmic reticulum membrane. Extracts misfolded glycoproteins, but not glycoproteins undergoing productive folding, from the calnexin cycle. It is directly involved in endoplasmic reticulum-associated degradation (ERAD) and targets misfolded glycoproteins for degradation in an N-glycan-independent manner, probably by forming a complex with SEL1L. It has low mannosidase activity, catalyzing mannose trimming from Man8GlcNAc2 to Man7GlcNAc2. This chain is ER degradation-enhancing alpha-mannosidase-like protein 1 (EDEM1), found in Homo sapiens (Human).